The chain runs to 261 residues: UPF0246 protein Daci_5283 (261 aa).

It belongs to the UPF0246 family.

The protein is UPF0246 protein Daci_5283 of Delftia acidovorans (strain DSM 14801 / SPH-1).